A 230-amino-acid chain; its full sequence is Cytidylate kinase (230 aa).

12–20 (GPSGAGKGT) serves as a coordination point for ATP.

It belongs to the cytidylate kinase family. Type 1 subfamily.

The protein localises to the cytoplasm. It carries out the reaction CMP + ATP = CDP + ADP. It catalyses the reaction dCMP + ATP = dCDP + ADP. The polypeptide is Cytidylate kinase (Aeromonas hydrophila subsp. hydrophila (strain ATCC 7966 / DSM 30187 / BCRC 13018 / CCUG 14551 / JCM 1027 / KCTC 2358 / NCIMB 9240 / NCTC 8049)).